A 309-amino-acid chain; its full sequence is MRVREIKNLLDNYNKQIGVSVSHVPHSNRKTVLNLQKSLDAINELSKLGFLDDDIERFKDLGSIYYSRVPEDKIEVDNHIANQITNHIKIVKEKLRGFGILIDQSVSDQNENVISVKLPQYNSLEELEKFIKKLNNAFQNGITLEEINGHYKLQGFDTGSMWIDILVNSSAAVIFVGQLIDAAINISKRSQELLITKANIEKLALQNEQLKLQVETSKALLDGIEKGIDTITDAEIKNVTEGANYSTESIGHIKQSVKIFAELLHEGTQFHPSLDAPSETVEAFPEPQKNLEEPQQLLETLADNLPEQE.

The segment at 272-291 (PSLDAPSETVEAFPEPQKNL) is disordered.

This is an uncharacterized protein from Bacillus subtilis (strain 168).